We begin with the raw amino-acid sequence, 504 residues long: Arabinose import ATP-binding protein AraG (504 aa).

2 ABC transporter domains span residues 8–243 and 256–499; these read LSFR…MVGR and YGEE…MPKV. ATP is bound at residue 40 to 47; that stretch reads GENGAGKS.

Belongs to the ABC transporter superfamily. Arabinose importer (TC 3.A.1.2.2) family. In terms of assembly, the complex is composed of two ATP-binding proteins (AraG), two transmembrane proteins (AraH) and a solute-binding protein (AraF).

Its subcellular location is the cell inner membrane. It catalyses the reaction L-arabinose(out) + ATP + H2O = L-arabinose(in) + ADP + phosphate + H(+). Functionally, part of the ABC transporter complex AraFGH involved in arabinose import. Responsible for energy coupling to the transport system. This Escherichia coli O6:K15:H31 (strain 536 / UPEC) protein is Arabinose import ATP-binding protein AraG.